The sequence spans 451 residues: AAA-ATPase At3g28570, mitochondrial (451 aa).

Residues 1–48 (MFAENLTRIGSNVAGLFFVWSTLKRYFPRQIQQLLFNAIQRIPIFKRL) constitute a mitochondrion transit peptide. 243-250 (GPPGTGKS) serves as a coordination point for ATP.

The protein belongs to the AAA ATPase family. BCS1 subfamily. Requires Mg(2+) as cofactor.

It is found in the mitochondrion. The enzyme catalyses ATP + H2O = ADP + phosphate + H(+). The polypeptide is AAA-ATPase At3g28570, mitochondrial (Arabidopsis thaliana (Mouse-ear cress)).